The sequence spans 390 residues: Argininosuccinate synthase (390 aa).

6 to 14 (SYSGGLDTT) lines the ATP pocket. Tyr83 contributes to the L-citrulline binding site. Gly113 provides a ligand contact to ATP. Residues Thr115, Asn119, and Asp120 each coordinate L-aspartate. Residue Asn119 participates in L-citrulline binding. Arg123, Ser169, Ser178, Glu254, and Tyr266 together coordinate L-citrulline.

The protein belongs to the argininosuccinate synthase family. Type 1 subfamily. As to quaternary structure, homotetramer.

The protein resides in the cytoplasm. The enzyme catalyses L-citrulline + L-aspartate + ATP = 2-(N(omega)-L-arginino)succinate + AMP + diphosphate + H(+). It functions in the pathway amino-acid biosynthesis; L-arginine biosynthesis; L-arginine from L-ornithine and carbamoyl phosphate: step 2/3. The protein is Argininosuccinate synthase of Archaeoglobus fulgidus (strain ATCC 49558 / DSM 4304 / JCM 9628 / NBRC 100126 / VC-16).